Reading from the N-terminus, the 226-residue chain is Ribose-5-phosphate isomerase A (226 aa).

Substrate contacts are provided by residues 26 to 29, 82 to 85, and 95 to 98; these read TGST, DGAD, and KGGG. Residue Glu-104 is the Proton acceptor of the active site. Residue Lys-122 participates in substrate binding.

Belongs to the ribose 5-phosphate isomerase family. In terms of assembly, homodimer.

It carries out the reaction aldehydo-D-ribose 5-phosphate = D-ribulose 5-phosphate. Its pathway is carbohydrate degradation; pentose phosphate pathway; D-ribose 5-phosphate from D-ribulose 5-phosphate (non-oxidative stage): step 1/1. In terms of biological role, catalyzes the reversible conversion of ribose-5-phosphate to ribulose 5-phosphate. The chain is Ribose-5-phosphate isomerase A from Streptococcus thermophilus (strain CNRZ 1066).